We begin with the raw amino-acid sequence, 419 residues long: Mitogen-activated protein kinase pmk-2 (419 aa).

Positions 49 to 350 constitute a Protein kinase domain; sequence YNSLKPLGEG…VSSALRHDYL (302 aa). ATP-binding positions include 55–63 and lysine 78; that span reads LGEGAYGVV. The active-site Proton acceptor is the aspartate 210. A Phosphothreonine modification is found at threonine 222. A TXY motif is present at residues 222 to 224; sequence TGY. Tyrosine 224 is modified (phosphotyrosine).

The protein belongs to the protein kinase superfamily. CMGC Ser/Thr protein kinase family. MAP kinase subfamily. Requires Mg(2+) as cofactor. In terms of processing, dually phosphorylated on Thr-222 and Tyr-224, which activates the enzyme.

The protein localises to the cytoplasm. It carries out the reaction L-seryl-[protein] + ATP = O-phospho-L-seryl-[protein] + ADP + H(+). The enzyme catalyses L-threonyl-[protein] + ATP = O-phospho-L-threonyl-[protein] + ADP + H(+). With respect to regulation, activated by phosphorylation on threonine and tyrosine. Inhibited by pyridinyl-imidazole related compounds. Its function is as follows. Responds to activation by environmental stress and pro-inflammatory cytokines by phosphorylating downstream targets. The sequence is that of Mitogen-activated protein kinase pmk-2 (pmk-2) from Caenorhabditis elegans.